A 64-amino-acid chain; its full sequence is Sperm protamine P1 (64 aa).

The segment at 1–64 (MVRYRRHSRS…QSRRRRRRRY (64 aa)) is disordered.

It belongs to the protamine P1 family. In terms of tissue distribution, testis.

The protein localises to the nucleus. Its subcellular location is the chromosome. Protamines substitute for histones in the chromatin of sperm during the haploid phase of spermatogenesis. They compact sperm DNA into a highly condensed, stable and inactive complex. The polypeptide is Sperm protamine P1 (PRM1) (Dromiciops gliroides (Monito del Monte)).